We begin with the raw amino-acid sequence, 1438 residues long: Pyochelin synthetase PchE (1438 aa).

The Carrier 1 domain occupies 6-85 (DSRTALRDWL…AWLDLLACAD (80 aa)). Position 46 is an O-(pantetheine 4'-phosphoryl)serine (serine 46). A condensation/cyclization region spans residues 136–442 (RTRDVDPQRL…ARRQGQPRSA (307 aa)). Positions 563–950 (RAAEAPDADA…GRVDQQVKVR (388 aa)) are adenylation. One can recognise a Carrier 2 domain in the interval 1350–1425 (EPLEAHEQAL…GLARHLQVQT (76 aa)). O-(pantetheine 4'-phosphoryl)serine is present on serine 1385.

It belongs to the NRP synthetase family. Requires pantetheine 4'-phosphate as cofactor.

The enzyme catalyses holo-[peptidyl-carrier protein] + L-cysteine + ATP = L-cysteinyl-[peptidyl-carrier protein] + AMP + diphosphate. Its pathway is siderophore biosynthesis. The protein operates within antifungal biosynthesis. Its function is as follows. Involved in the biosynthesis of the siderophore pyochelin. Accepts salicylate activated by PchD at the first peptidyl carrier domain (ArCP), and activates and fixes one molecule of cysteine at the second peptidyl carrier domain (PCP1) via a thioester linkage to the phosphopanthetheine moiety. Then catalyzes the condensation reaction between the salicylate bound to the first site and the cysteine bound to the second site, and the cyclization of the cysteine to form the salicyl-thiazolinyl-S-PCP1 intermediate at the second site. When this intermediate is released by the action of a thioesterase, it produces the antifungal antibiotic dihydroaeruginoic acid (Dha or hydroxyphenyl-thiazolinyl-carboxylate). The polypeptide is Pyochelin synthetase PchE (Pseudomonas aeruginosa (strain ATCC 15692 / DSM 22644 / CIP 104116 / JCM 14847 / LMG 12228 / 1C / PRS 101 / PAO1)).